Reading from the N-terminus, the 433-residue chain is Dihydroorotase (433 aa).

Histidine 63 and histidine 65 together coordinate Zn(2+). Substrate is bound by residues 65-67 (HLR) and asparagine 97. Zn(2+) is bound by residues aspartate 155, histidine 182, and histidine 235. A substrate-binding site is contributed by asparagine 283. Residue aspartate 310 participates in Zn(2+) binding. Aspartate 310 is a catalytic residue. Histidine 314 provides a ligand contact to substrate.

The protein belongs to the metallo-dependent hydrolases superfamily. DHOase family. Class I DHOase subfamily. Zn(2+) serves as cofactor.

The catalysed reaction is (S)-dihydroorotate + H2O = N-carbamoyl-L-aspartate + H(+). It participates in pyrimidine metabolism; UMP biosynthesis via de novo pathway; (S)-dihydroorotate from bicarbonate: step 3/3. In terms of biological role, catalyzes the reversible cyclization of carbamoyl aspartate to dihydroorotate. The sequence is that of Dihydroorotase from Anaeromyxobacter dehalogenans (strain 2CP-1 / ATCC BAA-258).